The following is a 409-amino-acid chain: Elongation factor Tu, chloroplastic (409 aa).

Residues 10 to 214 (KPHINIGTIG…AVDAYIPTPE (205 aa)) enclose the tr-type G domain. The interval 19-26 (GHVDHGKT) is G1. 19 to 26 (GHVDHGKT) is a binding site for GTP. Thr-26 provides a ligand contact to Mg(2+). A G2 region spans residues 60–64 (GITIN). A G3 region spans residues 81 to 84 (DCPG). GTP contacts are provided by residues 81–85 (DCPGH) and 136–139 (NKQD). Positions 136-139 (NKQD) are G4. Residues 174–176 (SRL) form a G5 region.

The protein belongs to the TRAFAC class translation factor GTPase superfamily. Classic translation factor GTPase family. EF-Tu/EF-1A subfamily.

It localises to the plastid. The protein resides in the chloroplast. It carries out the reaction GTP + H2O = GDP + phosphate + H(+). GTP hydrolase that promotes the GTP-dependent binding of aminoacyl-tRNA to the A-site of ribosomes during protein biosynthesis. The protein is Elongation factor Tu, chloroplastic (tufA) of Stephanocyclus meneghinianus (Diatom).